A 482-amino-acid chain; its full sequence is tRNA sulfurtransferase (482 aa).

The THUMP domain maps to 61–165 (LAIRDALTRI…DDRLLLIKGR (105 aa)). ATP is bound by residues 183–184 (LI), K265, G287, and Q296. C344 and C456 are joined by a disulfide. Positions 404–482 (FGPNDVILDI…GFENVKVYRP (79 aa)) constitute a Rhodanese domain. C456 (cysteine persulfide intermediate) is an active-site residue.

It belongs to the ThiI family.

It localises to the cytoplasm. It catalyses the reaction [ThiI sulfur-carrier protein]-S-sulfanyl-L-cysteine + a uridine in tRNA + 2 reduced [2Fe-2S]-[ferredoxin] + ATP + H(+) = [ThiI sulfur-carrier protein]-L-cysteine + a 4-thiouridine in tRNA + 2 oxidized [2Fe-2S]-[ferredoxin] + AMP + diphosphate. It carries out the reaction [ThiS sulfur-carrier protein]-C-terminal Gly-Gly-AMP + S-sulfanyl-L-cysteinyl-[cysteine desulfurase] + AH2 = [ThiS sulfur-carrier protein]-C-terminal-Gly-aminoethanethioate + L-cysteinyl-[cysteine desulfurase] + A + AMP + 2 H(+). The protein operates within cofactor biosynthesis; thiamine diphosphate biosynthesis. Its function is as follows. Catalyzes the ATP-dependent transfer of a sulfur to tRNA to produce 4-thiouridine in position 8 of tRNAs, which functions as a near-UV photosensor. Also catalyzes the transfer of sulfur to the sulfur carrier protein ThiS, forming ThiS-thiocarboxylate. This is a step in the synthesis of thiazole, in the thiamine biosynthesis pathway. The sulfur is donated as persulfide by IscS. The protein is tRNA sulfurtransferase of Salmonella enteritidis PT4 (strain P125109).